Reading from the N-terminus, the 468-residue chain is Putative FBD-associated F-box protein At5g22720 (468 aa).

An F-box domain is found at 22 to 68; that stretch reads EDLISQLPDSLITQILFYLQTKKAVTTSVLSKRWRSLWLSTPGLVLI. Residues 375–433 form the FBD domain; the sequence is ELRLSFVPRCLLSSLEFVEIKGCSRSNMERVKYVGEPIETKLARYFVENSTILKKLVLP.

This is Putative FBD-associated F-box protein At5g22720 from Arabidopsis thaliana (Mouse-ear cress).